The sequence spans 340 residues: MASSSSSPTPSAAAAVSPLTEEELTLTVKWNGKEYTVRICADDSVAELKRRICLLTTVLPKRQKLLYPKIGNKLSDDSLLLSSISFKPSLKMTMIGTVEDDIIVDQAESPEIVDDFELGKEEAVDVKDKEVNKQKLRRRIDQYKINLRTPCRQGKKLLVLDIDYTLFDHRSTAENPLQLMRPYLHEFLTAAYAEYDIMIWSATSMKWVELKMTELGVLNNPNYKVTALLDHLAMITVQSDTRGIFDCKPLGLIWALLPEFYNPGNTIMFDDLRRNFVMNPQNGLTIKPFRKAHANRDTDQELVKLTQYLLTIAELSDLSSLHHSRWESFSQDNVKRRRQE.

One can recognise a Ubiquitin-like domain in the interval 24–101 (LTLTVKWNGK…MTMIGTVEDD (78 aa)). Residues 151-312 (CRQGKKLLVL…VKLTQYLLTI (162 aa)) form the FCP1 homology domain. Residues 151–312 (CRQGKKLLVL…VKLTQYLLTI (162 aa)) form a phosphatase region. Asp161, Asp163, and Asp271 together coordinate Mg(2+).

The cofactor is Mg(2+).

It localises to the nucleus. The enzyme catalyses O-phospho-L-seryl-[protein] + H2O = L-seryl-[protein] + phosphate. It carries out the reaction O-phospho-L-threonyl-[protein] + H2O = L-threonyl-[protein] + phosphate. Functionally, dephosphorylates 26S nuclear proteasomes, thereby decreasing their proteolytic activity. The dephosphorylation may prevent assembly of the core and regulatory particles (CP and RP) into mature 26S proteasome. The polypeptide is Ubiquitin-like domain-containing CTD phosphatase (Arabidopsis thaliana (Mouse-ear cress)).